A 464-amino-acid chain; its full sequence is uncharacterized protein (464 aa).

One can recognise a TRAM domain in the interval 13–71 (MLKVSDIIQIKIDKIVFGGEGLGYYNGFAVFVPMSIPEDELEIEIISIKKTYARGLIKN). 4 residues coordinate S-adenosyl-L-methionine: Q295, Y324, E345, and D393. Catalysis depends on C420, which acts as the Nucleophile.

It belongs to the class I-like SAM-binding methyltransferase superfamily. RNA M5U methyltransferase family.

This is an uncharacterized protein from Fusobacterium nucleatum subsp. nucleatum (strain ATCC 25586 / DSM 15643 / BCRC 10681 / CIP 101130 / JCM 8532 / KCTC 2640 / LMG 13131 / VPI 4355).